Here is a 499-residue protein sequence, read N- to C-terminus: Protein phosphatase PP2A 55 kDa regulatory subunit (499 aa).

The interval 1–30 (MGRWGRQSPVLEPPDPQMQTTPPPPTLPPR) is disordered. A compositionally biased stretch (pro residues) spans 11–28 (LEPPDPQMQTTPPPPTLP). 7 WD repeats span residues 79-118 (TDAD…KAAN), 144-185 (EIEE…KSFG), 228-266 (AHTY…QSYN), 277-317 (ELTE…LCDR), 336-374 (EIIS…KPIE), 391-432 (ENDC…DVTL), and 467-498 (DFNK…FQDK).

It belongs to the phosphatase 2A regulatory subunit B family. PP2A exists in several trimeric forms, all of which consist of a core composed of a catalytic subunit associated with a 65 kDa regulatory subunit (PR65) (subunit A). The core complex associates with a third, variable subunit (subunit B), which confers distinct properties to the holoenzyme.

In terms of biological role, could perform a substrate recognition function or could be responsible for targeting the enzyme complex to the appropriate subcellular compartment. The protein is Protein phosphatase PP2A 55 kDa regulatory subunit (tws) of Drosophila melanogaster (Fruit fly).